A 336-amino-acid chain; its full sequence is Fructose-1,6-bisphosphatase class 1 (336 aa).

The Mg(2+) site is built by Glu-92, Asp-115, Leu-117, and Asp-118. Residues 118-121 (DGSS), Asn-211, Tyr-244, 262-264 (YLY), and Lys-274 contribute to the substrate site. Glu-280 provides a ligand contact to Mg(2+).

This sequence belongs to the FBPase class 1 family. Homotetramer. Mg(2+) is required as a cofactor.

The protein resides in the cytoplasm. It catalyses the reaction beta-D-fructose 1,6-bisphosphate + H2O = beta-D-fructose 6-phosphate + phosphate. The protein operates within carbohydrate biosynthesis; gluconeogenesis. This chain is Fructose-1,6-bisphosphatase class 1, found in Vibrio cholerae serotype O1 (strain ATCC 39541 / Classical Ogawa 395 / O395).